The primary structure comprises 206 residues: Large ribosomal subunit protein uL3 (206 aa).

Residues 116-149 (GFQGAIKRHNQSRGPMSHGSRYHRRPGSMGPVAP) form a disordered region.

This sequence belongs to the universal ribosomal protein uL3 family. As to quaternary structure, part of the 50S ribosomal subunit. Forms a cluster with proteins L14 and L19.

One of the primary rRNA binding proteins, it binds directly near the 3'-end of the 23S rRNA, where it nucleates assembly of the 50S subunit. The polypeptide is Large ribosomal subunit protein uL3 (Shouchella clausii (strain KSM-K16) (Alkalihalobacillus clausii)).